Consider the following 427-residue polypeptide: Isoprenylcysteine alpha-carbonyl methylesterase ICME (427 aa).

Positions E26–R59 are disordered. Transmembrane regions (helical) follow at residues L102 to S122 and V157 to L177. Substrate-binding positions include G163–A165 and Q234–A236. Residues S235, D336, and H368 contribute to the active site.

Belongs to the AB hydrolase superfamily. Isoprenylcysteine methylesterase family. As to expression, expressed in roots, rosette and cauline leaves, stems, flowers and siliques.

Its subcellular location is the endoplasmic reticulum membrane. It is found in the golgi apparatus membrane. It carries out the reaction [protein]-C-terminal S-[(2E,6E)-farnesyl]-L-cysteine methyl ester + H2O = [protein]-C-terminal S-[(2E,6E)-farnesyl]-L-cysteine + methanol + H(+). Catalyzes the demethylation of isoprenylcysteine methylesters. In vitro, is specific for N-acetyl-S-farnesyl-L-cysteine methyl ester (AFCme) and has low activity toward N-acetyl-S-geranyl-L-cysteine methyl ester (AGCme). Acts as a positive regulator of ABA signaling. May be involved in the demethylation and inactivation of isoprenylated negative regulators of abscisic acid (ABA) signaling. Carboxyl methylation is a reversible and potentially regulated step in the post-translational modification of prenylated proteins. This is Isoprenylcysteine alpha-carbonyl methylesterase ICME from Arabidopsis thaliana (Mouse-ear cress).